We begin with the raw amino-acid sequence, 352 residues long: Putative squamosa promoter-binding-like protein 19 (352 aa).

The tract at residues 68 to 88 (AAAPATRRARGGSGGGGGGGG) is disordered. The segment covering 78-88 (GGSGGGGGGGG) has biased composition (gly residues). The segment at 90–167 (AEACSVDGCR…DGHNRRRRKP (78 aa)) adopts an SBP-type zinc-finger fold. Zn(2+) contacts are provided by Cys93, Cys98, Cys115, His118, Cys134, Cys137, His141, and Cys153. A Bipartite nuclear localization signal motif is present at residues 150–166 (KKSCRKRLDGHNRRRRK). The interval 152 to 174 (SCRKRLDGHNRRRRKPQHDALNP) is disordered.

It is found in the nucleus. In terms of biological role, trans-acting factor that binds specifically to the consensus nucleotide sequence 5'-TNCGTACAA-3'. This is Putative squamosa promoter-binding-like protein 19 (SPL19) from Oryza sativa subsp. japonica (Rice).